A 681-amino-acid chain; its full sequence is DNA ligase (681 aa).

Residues 42–46 (DAEYD), 91–92 (SL), and Glu120 contribute to the NAD(+) site. Lys122 functions as the N6-AMP-lysine intermediate in the catalytic mechanism. The NAD(+) site is built by Arg143, Glu180, Lys302, and Lys326. Residues Cys420, Cys423, Cys438, and Cys444 each contribute to the Zn(2+) site. The region spanning 603 to 681 (ADAQPLLGQT…EAGLIELIGL (79 aa)) is the BRCT domain.

This sequence belongs to the NAD-dependent DNA ligase family. LigA subfamily. Mg(2+) is required as a cofactor. Mn(2+) serves as cofactor.

It carries out the reaction NAD(+) + (deoxyribonucleotide)n-3'-hydroxyl + 5'-phospho-(deoxyribonucleotide)m = (deoxyribonucleotide)n+m + AMP + beta-nicotinamide D-nucleotide.. In terms of biological role, DNA ligase that catalyzes the formation of phosphodiester linkages between 5'-phosphoryl and 3'-hydroxyl groups in double-stranded DNA using NAD as a coenzyme and as the energy source for the reaction. It is essential for DNA replication and repair of damaged DNA. The sequence is that of DNA ligase from Shewanella amazonensis (strain ATCC BAA-1098 / SB2B).